A 113-amino-acid polypeptide reads, in one-letter code: Hydrogenase maturation factor HypA (113 aa).

His-2 contacts Ni(2+). Zn(2+) is bound by residues Cys-70, Cys-73, Cys-86, and Cys-88.

Belongs to the HypA/HybF family.

Functionally, involved in the maturation of [NiFe] hydrogenases. Required for nickel insertion into the metal center of the hydrogenase. The polypeptide is Hydrogenase maturation factor HypA (Nostoc sp. (strain PCC 7120 / SAG 25.82 / UTEX 2576)).